A 200-amino-acid chain; its full sequence is Charged multivesicular body protein 6 (200 aa).

Glycine 2 carries N-myristoyl glycine lipidation. Residues 10–145 (QSRVTEQDRA…YQRQIDELLA (136 aa)) are a coiled coil. At serine 119 the chain carries Phosphoserine. Residue threonine 130 is modified to Phosphothreonine. A Type-2 MIT-interacting motif motif is present at residues 168-179 (MELPEVPSEPLP). The disordered stretch occupies residues 168–200 (MELPEVPSEPLPDRNPEAPAKARSRQAELVAAS).

It belongs to the SNF7 family. In terms of assembly, probable core component of the endosomal sorting required for transport complex III (ESCRT-III). ESCRT-III components are thought to multimerize to form a flat lattice on the perimeter membrane of the endosome. Several assembly forms of ESCRT-III may exist that interact and act sequentially. Interacts with VPS4A; the interaction is direct. Interacts with VPS4B; the interaction is direct. Interacts with CHMP4A, CHMP4B and CHMP4C. Interacts with SNF8, VPS25 and VPS36. ISGylated in a CHMP5-dependent manner. Isgylation weakens its interaction with VPS4A.

It is found in the endomembrane system. The protein localises to the endosome membrane. The protein resides in the late endosome membrane. It localises to the membrane. Its function is as follows. Probable core component of the endosomal sorting required for transport complex III (ESCRT-III) which is involved in multivesicular bodies (MVBs) formation and sorting of endosomal cargo proteins into MVBs. MVBs contain intraluminal vesicles (ILVs) that are generated by invagination and scission from the limiting membrane of the endosome and mostly are delivered to lysosomes enabling degradation of membrane proteins, such as stimulated growth factor receptors, lysosomal enzymes and lipids. The MVB pathway appears to require the sequential function of ESCRT-O, -I,-II and -III complexes. ESCRT-III proteins mostly dissociate from the invaginating membrane before the ILV is released. The ESCRT machinery also functions in topologically equivalent membrane fission events, such as the terminal stages of cytokinesis. ESCRT-III proteins are believed to mediate the necessary vesicle extrusion and/or membrane fission activities, possibly in conjunction with the AAA ATPase VPS4. In the ESCRT-III complex, it probably serves as an acceptor for the ESCRT-II complex on endosomal membranes. This is Charged multivesicular body protein 6 (Chmp6) from Mus musculus (Mouse).